The chain runs to 129 residues: Capsid protein (129 aa).

The interval 31-104 (EWISSNSRSQ…FATNSDCELI (74 aa)) is viral RNA-binding.

It belongs to the Leviviricetes capsid protein family. In terms of assembly, homodimer. The capsid proteins form dimers that assemble by group of 5. Twelve such pentamers are linked together with free dimers. The homodimers binds to the viral RNA via an operator hairpin, but also to many other RNA sequences in the viral genome; this interaction probably shifts the virus from the replicative to the assembly phase and ensures specific encapsidation of the viral genome.

The protein resides in the virion. Capsid protein self-assembles to form an icosahedral capsid with a T=3 symmetry, about 26 nm in diameter, and consisting of 89 capsid proteins dimers (178 capsid proteins). Involved in viral genome encapsidation through the interaction between a capsid protein dimer and the multiple packaging signals present in the RNA genome. The capsid also contains 1 copy of the A2 maturation protein. Its function is as follows. Acts as a translational repressor of viral replicase synthesis late in infection. This latter function is the result of capsid protein interaction with an RNA hairpin which contains the replicase ribosome-binding site. This Escherichia coli (Bacteriophage R17) protein is Capsid protein.